The primary structure comprises 261 residues: SURF1-like protein (261 aa).

2 consecutive transmembrane segments (helical) span residues 17–37 and 223–243; these read LYWA…WQIF and LSYI…WVFL.

This sequence belongs to the SURF1 family.

Its subcellular location is the mitochondrion inner membrane. Its function is as follows. Probably involved in the biogenesis of the COX complex. The sequence is that of SURF1-like protein from Monosiga brevicollis (Choanoflagellate).